Consider the following 224-residue polypeptide: Probable 2' cyclic ADP-D-ribose synthase BdTIR (224 aa).

A TIR domain is found at 51-178; sequence SRYEVFINHR…RFKFALREAK (128 aa). NAD(+)-binding positions include 60–65 and G93; that span reads RGVDTK. Residue E127 is part of the active site.

Homodimer.

The catalysed reaction is NAD(+) + H2O = ADP-D-ribose + nicotinamide + H(+). The enzyme catalyses NADP(+) + H2O = ADP-D-ribose 2'-phosphate + nicotinamide + H(+). It catalyses the reaction NAD(+) = 2'cADPR + nicotinamide + H(+). In terms of biological role, an NAD(+) hydrolase (NADase). Upon activation catalyzes cleavage of NAD(+) into ADP-D-ribose (ADPR) and nicotinamide; NAD(+) cleavage triggers a defense system that promotes cell death. In addition to ADPR, also generates a cyclization variant of cyclic ADPR termed v-cADPR (2'cADPR). Also hydrolyzes NADP(+), but not other NAD(+)-related molecules. v-cADPR activates ThsA, an NAD(+) hydrolase in B.cereus (AC J8G6Z1). Probably makes 2'cADPR; the cADPR made by this protein is bound by cmTad1 (AC P0DW61) and activates ThsA from B.cereus. Boiling cmTad1 bound to the cyclic nucleotide releases 2'cADPR, strongly suggesting it is the product of this protein. The polypeptide is Probable 2' cyclic ADP-D-ribose synthase BdTIR (Brachypodium distachyon (Purple false brome)).